A 285-amino-acid polypeptide reads, in one-letter code: NAD kinase (285 aa).

Asp67 functions as the Proton acceptor in the catalytic mechanism. Residues Asp67–Gly68, Asn141–Asp142, Arg152, Lys169, Asp171, Thr182–Ser187, and Gln242 each bind NAD(+).

Belongs to the NAD kinase family. A divalent metal cation is required as a cofactor.

The protein localises to the cytoplasm. The enzyme catalyses NAD(+) + ATP = ADP + NADP(+) + H(+). Involved in the regulation of the intracellular balance of NAD and NADP, and is a key enzyme in the biosynthesis of NADP. Catalyzes specifically the phosphorylation on 2'-hydroxyl of the adenosine moiety of NAD to yield NADP. In Trichlorobacter lovleyi (strain ATCC BAA-1151 / DSM 17278 / SZ) (Geobacter lovleyi), this protein is NAD kinase.